We begin with the raw amino-acid sequence, 98 residues long: MALTKAEMAEHLFEKLGMNKRDAKDLVEAFFEEVREALESGEQVKLSGFGNFDLRQKSERPGRNPKTGEDIPIKARRVVTFRPGQKLKSRVENTKPTE.

The interval 52–73 is disordered; sequence FDLRQKSERPGRNPKTGEDIPI. Residues 54 to 73 are compositionally biased toward basic and acidic residues; the sequence is LRQKSERPGRNPKTGEDIPI.

It belongs to the bacterial histone-like protein family. In terms of assembly, heterodimer of an alpha and a beta chain.

In terms of biological role, this protein is one of the two subunits of integration host factor, a specific DNA-binding protein that functions in genetic recombination as well as in transcriptional and translational control. This Pseudoalteromonas atlantica (strain T6c / ATCC BAA-1087) protein is Integration host factor subunit alpha.